We begin with the raw amino-acid sequence, 385 residues long: Mannitol-1-phosphate 5-dehydrogenase (385 aa).

Residue 3 to 14 coordinates NAD(+); sequence ALHFGAGNIGRG.

Belongs to the mannitol dehydrogenase family.

It carries out the reaction D-mannitol 1-phosphate + NAD(+) = beta-D-fructose 6-phosphate + NADH + H(+). The protein is Mannitol-1-phosphate 5-dehydrogenase of Pasteurella multocida (strain Pm70).